Reading from the N-terminus, the 129-residue chain is Glycine cleavage system H protein (129 aa).

One can recognise a Lipoyl-binding domain in the interval 24–106 (LVRVGISAFA…HGEGWLLVVR (83 aa)). Lysine 65 is modified (N6-lipoyllysine).

Belongs to the GcvH family. In terms of assembly, the glycine cleavage system is composed of four proteins: P, T, L and H. (R)-lipoate serves as cofactor.

In terms of biological role, the glycine cleavage system catalyzes the degradation of glycine. The H protein shuttles the methylamine group of glycine from the P protein to the T protein. In Prochlorococcus marinus (strain MIT 9303), this protein is Glycine cleavage system H protein.